A 505-amino-acid chain; its full sequence is Protein FAM114A2 (505 aa).

Residues 1-65 (MSDKDDIETP…KPSSDLETSK (65 aa)) form a disordered region. Over residues 51–63 (KRPETKPSSDLET) the composition is skewed to basic and acidic residues. Serine 87, serine 146, and serine 209 each carry phosphoserine. Residues 268–295 (LNSLSGEELETLKVELEQLKETFSLAEF) are a coiled coil. Residues 342-366 (KSLTKPLAENEEGEKQSEAENTEQV) are disordered.

This sequence belongs to the FAM114 family.

The protein is Protein FAM114A2 (FAM114A2) of Homo sapiens (Human).